A 95-amino-acid chain; its full sequence is Integration host factor subunit beta (95 aa).

This sequence belongs to the bacterial histone-like protein family. Heterodimer of an alpha and a beta chain.

Functionally, this protein is one of the two subunits of integration host factor, a specific DNA-binding protein that functions in genetic recombination as well as in transcriptional and translational control. This chain is Integration host factor subunit beta, found in Klebsiella pneumoniae subsp. pneumoniae (strain ATCC 700721 / MGH 78578).